A 197-amino-acid polypeptide reads, in one-letter code: Mediator of RNA polymerase II transcription subunit 10 (197 aa).

Positions 1–39 are disordered; the sequence is MSSTAGTRRPRQITPTSPSPSPEPQPGATNGSSSTINVA. Polar residues predominate over residues 27 to 37; the sequence is GATNGSSSTIN.

This sequence belongs to the Mediator complex subunit 10 family. As to quaternary structure, component of the Mediator complex.

It localises to the nucleus. In terms of biological role, component of the Mediator complex, a coactivator involved in the regulated transcription of nearly all RNA polymerase II-dependent genes. Mediator functions as a bridge to convey information from gene-specific regulatory proteins to the basal RNA polymerase II transcription machinery. Mediator is recruited to promoters by direct interactions with regulatory proteins and serves as a scaffold for the assembly of a functional preinitiation complex with RNA polymerase II and the general transcription factors. The polypeptide is Mediator of RNA polymerase II transcription subunit 10 (NUT2) (Mycosarcoma maydis (Corn smut fungus)).